The primary structure comprises 656 residues: Pumilio homology domain family member 6 (656 aa).

Residues 1–107 (MAPLTKKTNG…GGENGNHTEQ (107 aa)) are disordered. Basic and acidic residues predominate over residues 13–23 (SAKEVSHSEKK). Phosphoserine; by CK2 occurs at positions 31, 34, and 35. Ser34 and Ser35 each carry phosphoserine. A compositionally biased stretch (acidic residues) spans 52–89 (SDDDDLDDLSTSDSEAEEEADELDISDDSEEHENENEE). Over residues 90–107 (KEGKDKSEGGENGNHTEQ) the composition is skewed to basic and acidic residues. Positions 133-483 (RLRVKTPPLP…ELLSKFAPMF (351 aa)) constitute a PUM-HD domain. Pumilio repeat units lie at residues 155 to 191 (ELSK…QIVD), 192 to 227 (ALKG…TIIN), 228 to 264 (ELHG…QMIK), 340 to 376 (ELLH…LILK), 377 to 413 (ALKN…KTFS), and 415 to 450 (TVKE…PIVK).

The protein belongs to the PUF6 family. In terms of assembly, component of the ASH1 mRNP composed of at least PUF6, SHE2, SHE3, SHE1 and the ASH1 mRNA. Interacts with SHE2 and FUN12. Phosphorylation by CK2 relieves translational repression activity.

The protein resides in the bud tip. Its subcellular location is the nucleus. It localises to the nucleolus. In terms of biological role, RNA-binding protein involved in post-transcriptional regulation. Component of the ASH1 mRNP which transports the ASH1 mRNA to the distal tip of the bud, where the ASH1 protein is translated and targeted to the daughter cell nucleus. Binds to the ASH1 3'-UTR containing the PUF consensus UUGU segment and represses its translation. This silencing of ASH1 mRNA is critical for asymmetric seggregation of ASH1 to the daughter cell nucleus. This Saccharomyces cerevisiae (strain ATCC 204508 / S288c) (Baker's yeast) protein is Pumilio homology domain family member 6 (PUF6).